The following is a 275-amino-acid chain: Large ribosomal subunit protein uL2 (275 aa).

A disordered region spans residues 225 to 275 (MNPIDHPHGGGEGRTSGGRHPVTPWGKPTKGKKTRSNKKTDRLIMRRRQTQ).

The protein belongs to the universal ribosomal protein uL2 family. As to quaternary structure, part of the 50S ribosomal subunit. Forms a bridge to the 30S subunit in the 70S ribosome.

Functionally, one of the primary rRNA binding proteins. Required for association of the 30S and 50S subunits to form the 70S ribosome, for tRNA binding and peptide bond formation. It has been suggested to have peptidyltransferase activity; this is somewhat controversial. Makes several contacts with the 16S rRNA in the 70S ribosome. This Paramagnetospirillum magneticum (strain ATCC 700264 / AMB-1) (Magnetospirillum magneticum) protein is Large ribosomal subunit protein uL2.